The chain runs to 140 residues: uncharacterized protein (140 aa).

Tandem repeats lie at residues 1 to 10, 11 to 20, 21 to 30, 31 to 40, 41 to 50, 51 to 60, 61 to 70, 71 to 80, 81 to 90, 91 to 100, 101 to 110, 111 to 120, 121 to 130, and 131 to 140. The 14 X 10 AA tandem repeats of [MT]-F-[AG]-R-L-[CS]-P-V-[SI]-[ET] stretch occupies residues 1–140; sequence MFARLCPVSE…MFGRLCPVIT (140 aa).

This is an uncharacterized protein from Homo sapiens (Human).